Here is a 126-residue protein sequence, read N- to C-terminus: Fluoride-specific ion channel FluC (126 aa).

4 helical membrane-spanning segments follow: residues 3 to 23, 36 to 56, 68 to 88, and 99 to 119; these read PLGF…RWGL, YGTL…VGFF, LLAI…SSEA, and WALL…ALGL. Na(+) contacts are provided by Gly76 and Thr79.

The protein belongs to the fluoride channel Fluc/FEX (TC 1.A.43) family.

It localises to the cell inner membrane. It catalyses the reaction fluoride(in) = fluoride(out). With respect to regulation, na(+) is not transported, but it plays an essential structural role and its presence is essential for fluoride channel function. In terms of biological role, fluoride-specific ion channel. Important for reducing fluoride concentration in the cell, thus reducing its toxicity. This is Fluoride-specific ion channel FluC from Cupriavidus pinatubonensis (strain JMP 134 / LMG 1197) (Cupriavidus necator (strain JMP 134)).